The sequence spans 361 residues: MVDNMISKAYYTTEIPEDRFEALSCIKDSQKPLKIILLGGVDSGKTTLATFLANELLNLGFKVAIVDSDVGQKSILPPATISLAFPETNFNNLYEIKPYKSYFVGSTAPIQFFGEMITGTKLLCDYAEDKADIIIVDTTGLISGSGADLKRMKIEMIKPDIIIALEKRNELKSILKPFENKIRVFYLKVYENAKSFSREERKEIRAEKWKEYFKNSKIYNIGFNDVVIGGTKVFQGEKILEDEKYLLESLFKWKILYGSKCDGRYTIVKRDLVNMPRQIDKNILYYIEPERFNNLIVGLIDEDSFCIGLGILKTIDFENETLEILTPISEEDIKNIREIRFGRIRVDENGEELGLLDRDSI.

39–46 (GGVDSGKT) serves as a coordination point for ATP.

Requires a divalent metal cation as cofactor.

The enzyme catalyses a 5'-end dephospho-2'-deoxyribonucleoside-DNA + ATP = a 5'-end 5'-phospho-2'-deoxyribonucleoside-DNA + ADP + H(+). The catalysed reaction is a 5'-end dephospho-ribonucleoside-RNA + ATP = a 5'-end 5'-phospho-ribonucleoside-RNA + ADP + H(+). Its function is as follows. Polynucleotide kinase that can phosphorylate the 5'-hydroxyl groups of both single-stranded RNA (ssRNA) and single-stranded DNA (ssDNA). Exhibits a strong preference for ssRNA. The sequence is that of Polyribonucleotide 5'-hydroxyl-kinase MJ1315 from Methanocaldococcus jannaschii (strain ATCC 43067 / DSM 2661 / JAL-1 / JCM 10045 / NBRC 100440) (Methanococcus jannaschii).